We begin with the raw amino-acid sequence, 303 residues long: tRNA pseudouridine synthase B (303 aa).

Aspartate 38 acts as the Nucleophile in catalysis.

It belongs to the pseudouridine synthase TruB family. Type 1 subfamily.

It catalyses the reaction uridine(55) in tRNA = pseudouridine(55) in tRNA. In terms of biological role, responsible for synthesis of pseudouridine from uracil-55 in the psi GC loop of transfer RNAs. This Levilactobacillus brevis (strain ATCC 367 / BCRC 12310 / CIP 105137 / JCM 1170 / LMG 11437 / NCIMB 947 / NCTC 947) (Lactobacillus brevis) protein is tRNA pseudouridine synthase B.